Here is a 660-residue protein sequence, read N- to C-terminus: Nuclear factor erythroid 2-related factor 3 (660 aa).

The tract at residues 120–214 (SAVGDGGQSA…KTEEHKMACA (95 aa)) is disordered. The span at 123 to 135 (GDGGQSASAGGGD) shows a compositional bias: gly residues. Basic and acidic residues-rich tracts occupy residues 173-186 (MLREKSEAVDHSSQ) and 204-214 (SKTEEHKMACA). The 64-residue stretch at 541 to 604 (LIRDIRRRGK…DIMRQKLHGL (64 aa)) folds into the bZIP domain. The interval 543–562 (RDIRRRGKNKVAAQNCRKRK) is basic motif. A leucine-zipper region spans residues 566 to 573 (ILNLEDDI).

Belongs to the bZIP family. CNC subfamily. In terms of assembly, heterodimer with MAFG, MAFK and other small MAF proteins that binds to the MAF recognition elements (MARE). As to expression, high level expression in brain, thymus, testis and placenta. Medium level expression in uterus, stomach and lung. Low level expression in kidney. No expression in heart, liver, spleen and ovary.

The protein localises to the nucleus. Its function is as follows. Activates erythroid-specific, globin gene expression. This Mus musculus (Mouse) protein is Nuclear factor erythroid 2-related factor 3 (Nfe2l3).